The following is a 200-amino-acid chain: MYCINTDCTYTKIAIEQLLHEKYFDDRRYCHSIKIYDLRFFKIEDVAYKLIQLFKERRKENIIFLCSDRFIHSKEKPRNIFFLDTKDSIRNWSRHLKKLRYCNSNLLICFLFLCGLYHISVFTGKKQVIIACIKKGFSFAEIVNFLNINARTLVNYLGGLTTYFILPYSDSLYKYIIDNIIASSTEEYHILLTNQRRYYV.

The helical transmembrane segment at 104–124 threads the bilayer; that stretch reads SNLLICFLFLCGLYHISVFTG.

The protein resides in the membrane. This is an uncharacterized protein from Escherichia coli (strain K12).